The following is a 687-amino-acid chain: Light-independent protochlorophyllide reductase subunit B (687 aa).

Asp-36 lines the [4Fe-4S] cluster pocket. Asp-441 acts as the Proton donor in catalysis. Residue 576 to 577 coordinates substrate; it reads GM.

Belongs to the ChlB/BchB/BchZ family. In terms of assembly, protochlorophyllide reductase is composed of three subunits; ChlL, ChlN and ChlB. Forms a heterotetramer of two ChlB and two ChlN subunits. [4Fe-4S] cluster is required as a cofactor.

The protein resides in the plastid. It is found in the chloroplast. It carries out the reaction chlorophyllide a + oxidized 2[4Fe-4S]-[ferredoxin] + 2 ADP + 2 phosphate = protochlorophyllide a + reduced 2[4Fe-4S]-[ferredoxin] + 2 ATP + 2 H2O. It participates in porphyrin-containing compound metabolism; chlorophyll biosynthesis (light-independent). Functionally, component of the dark-operative protochlorophyllide reductase (DPOR) that uses Mg-ATP and reduced ferredoxin to reduce ring D of protochlorophyllide (Pchlide) to form chlorophyllide a (Chlide). This reaction is light-independent. The NB-protein (ChlN-ChlB) is the catalytic component of the complex. The chain is Light-independent protochlorophyllide reductase subunit B from Chlamydomonas reinhardtii (Chlamydomonas smithii).